A 160-amino-acid polypeptide reads, in one-letter code: Histone H2A.Z-specific chaperone CHZ1 (160 aa).

A compositionally biased stretch (basic and acidic residues) spans 1–29 (MSDEAKEKRELESQKESSHNKSEKSVEPK). Positions 1 to 160 (MSDEAKEKRE…DEEDDDFKEQ (160 aa)) are disordered. S2 is subject to N-acetylserine. A compositionally biased stretch (polar residues) spans 56–65 (LTKSENNGTV). 2 positions are modified to phosphoserine: S68 and S70. Over residues 84 to 94 (EGEEEEDDLAE) the composition is skewed to acidic residues. The important for H2A.Z-H2B binding stretch occupies residues 87-108 (EEEDDLAEIDTSNIITSGRRTR). Residues 110–138 (KVIDYKKTAEELDKKEPSTDSKDDVGYGE) are compositionally biased toward basic and acidic residues. Residues 139 to 160 (KEEDEEDEEDEEDEEDDDFKEQ) show a composition bias toward acidic residues.

This sequence belongs to the CHZ1 family. Forms a heterotrimer with H2A.Z-H2B, stabilizing the association of the histone dimer. Also, with a lower affinity, forms a heterotrimer with H2A-H2B.

The protein resides in the nucleus. Its function is as follows. Forms a chaperone-bound H2A.Z-H2B complex that acts as a source for SWR1 complex-dependent H2A to H2A.Z histone replacement in chromatin. This is Histone H2A.Z-specific chaperone CHZ1 (CHZ1) from Saccharomyces cerevisiae (strain YJM789) (Baker's yeast).